The primary structure comprises 164 residues: Phosphopantetheine adenylyltransferase (164 aa).

Substrate is bound at residue Ser-9. Residues 9–10 and His-17 each bind ATP; that span reads SF. Substrate-binding residues include Lys-41, Leu-73, and Lys-87. Residues 88–90, Glu-98, and 123–129 contribute to the ATP site; these read GLR and YSYLSSS.

Belongs to the bacterial CoaD family. As to quaternary structure, homohexamer. The cofactor is Mg(2+).

It is found in the cytoplasm. The catalysed reaction is (R)-4'-phosphopantetheine + ATP + H(+) = 3'-dephospho-CoA + diphosphate. Its pathway is cofactor biosynthesis; coenzyme A biosynthesis; CoA from (R)-pantothenate: step 4/5. In terms of biological role, reversibly transfers an adenylyl group from ATP to 4'-phosphopantetheine, yielding dephospho-CoA (dPCoA) and pyrophosphate. This chain is Phosphopantetheine adenylyltransferase, found in Clostridium botulinum (strain ATCC 19397 / Type A).